The chain runs to 161 residues: Probable ubiquitin-conjugating enzyme E2 17 (161 aa).

The UBC core domain maps to 15-161 (IATNRLQKEF…TRWRFHDDKV (147 aa)). Cysteine 99 (glycyl thioester intermediate) is an active-site residue.

It belongs to the ubiquitin-conjugating enzyme family.

The catalysed reaction is S-ubiquitinyl-[E1 ubiquitin-activating enzyme]-L-cysteine + [E2 ubiquitin-conjugating enzyme]-L-cysteine = [E1 ubiquitin-activating enzyme]-L-cysteine + S-ubiquitinyl-[E2 ubiquitin-conjugating enzyme]-L-cysteine.. The protein operates within protein modification; protein ubiquitination. Its function is as follows. Accepts the ubiquitin from the E1 complex and catalyzes its covalent attachment to other proteins. This is Probable ubiquitin-conjugating enzyme E2 17 (UBC17) from Arabidopsis thaliana (Mouse-ear cress).